The following is an 858-amino-acid chain: DNA mismatch repair protein MutS (858 aa).

Residue 613–620 coordinates ATP; it reads GPNMAGKS.

It belongs to the DNA mismatch repair MutS family.

In terms of biological role, this protein is involved in the repair of mismatches in DNA. It is possible that it carries out the mismatch recognition step. This protein has a weak ATPase activity. In Dehalococcoides mccartyi (strain ATCC BAA-2100 / JCM 16839 / KCTC 5957 / BAV1), this protein is DNA mismatch repair protein MutS.